Reading from the N-terminus, the 273-residue chain is Phosphate import ATP-binding protein PstB 1 (273 aa).

The ABC transporter domain occupies 27-268; the sequence is ISIEHLSLYY…PLKKQTEDYI (242 aa). Residue 59 to 66 participates in ATP binding; it reads GPSGCGKS.

This sequence belongs to the ABC transporter superfamily. Phosphate importer (TC 3.A.1.7) family. The complex is composed of two ATP-binding proteins (PstB), two transmembrane proteins (PstC and PstA) and a solute-binding protein (PstS).

It is found in the cell inner membrane. It catalyses the reaction phosphate(out) + ATP + H2O = ADP + 2 phosphate(in) + H(+). Functionally, part of the ABC transporter complex PstSACB involved in phosphate import. Responsible for energy coupling to the transport system. The sequence is that of Phosphate import ATP-binding protein PstB 1 from Vibrio cholerae serotype O1 (strain ATCC 39315 / El Tor Inaba N16961).